Here is a 301-residue protein sequence, read N- to C-terminus: MGSKTSKMCCPQLRKKKRQKAHKEGPSSQELNDLNAKSQGPNELLQKIKEYEQEIRNILQKHQEEKTALADAHKADVEARTLVLQAQAQKDRDAETVKLLSEQAATMKAEMEEMFAELQKSYEQEKSSLTEIHQQLTDALQESVDELNSQLASFREKMKRVEESILSQDYQRHIQDYGSPGQFWEKELQSLHFVIEMKSELIREQDKRLQRHKSTMERSLELEERSRTLQQENEALKVQTQKQGAITVRLSEELLSIQTTLEKQTHRCEQLEREKEQNLYRAVIGDITQQFSLQELPVMVL.

A disordered region spans residues 1-43; sequence MGSKTSKMCCPQLRKKKRQKAHKEGPSSQELNDLNAKSQGPNE. A lipid anchor (N-myristoyl glycine) is attached at G2. Over residues 26-41 the composition is skewed to polar residues; it reads PSSQELNDLNAKSQGP. Coiled coils occupy residues 42 to 167 and 213 to 281; these read NELL…SILS and KSTM…NLYR.

Belongs to the CCDC69 family.

The protein resides in the cytoplasm. It localises to the cytoskeleton. It is found in the spindle. The protein localises to the midbody. In terms of biological role, may act as a scaffold to regulate the recruitment and assembly of spindle midzone components. The protein is Coiled-coil domain-containing protein 69-B (ccdc69-b) of Xenopus laevis (African clawed frog).